An 817-amino-acid chain; its full sequence is Neurabin-2 (817 aa).

2 actin-binding regions span residues 1–154 (MMKT…FERS) and 164–283 (EAAA…QHRV). Residues 1 to 165 (MMKTEPRGPG…PAAAGGDKEA (165 aa)) form a disordered region. Phosphoserine occurs at positions 15 and 17. The span at 44–58 (GAHHKKYGSNVHRIK) shows a compositional bias: basic residues. Phosphoserine occurs at positions 94, 100, and 116. An interaction with D(2) dopamine receptor region spans residues 100 to 371 (SLNENVDHSA…PERGVGNGRA (272 aa)). A compositionally biased stretch (pro residues) spans 131-141 (SAQPAPPPHPP). The interval 169 to 255 (RLLRQERAGL…KRSRVFQPPP (87 aa)) is interaction with ADRA2A, ADRA2B and ADRA2C. Ser192 is modified (phosphoserine). Thr193 carries the post-translational modification Phosphothreonine. At Ser205 the chain carries Phosphoserine. Thr207 carries the post-translational modification Phosphothreonine. A disordered region spans residues 216-447 (EKADSRTGLH…SEEEDPAPSR (232 aa)). A compositionally biased stretch (pro residues) spans 252 to 261 (QPPPPPPPAP). Basic and acidic residues predominate over residues 291 to 302 (KPREVRKIKPVE). Residues 333 to 342 (STVATAASPA) are compositionally biased toward low complexity. Positions 344–356 (EEPKAQAAPEKEA) are enriched in basic and acidic residues. Positions 410–425 (LEEDDEDDEEDGEPPY) are enriched in acidic residues. The interval 417-494 (DEEDGEPPYE…LEKRVERLEL (78 aa)) is interaction with protein phosphatase 1. A Phosphoserine modification is found at Ser438. The PP1-binding motif signature appears at 447–451 (RKIHF). The segment at 480-525 (SAEYELEKRVERLELFPVELEKDSEGLGISIIGMGAGADMGLEKLG) is interaction with RGS2. The PDZ domain maps to 496–584 (PVELEKDSEG…RVRFMIGRER (89 aa)). Residues 595 to 816 (IQQTLEQERW…NLQTLRNSNS (222 aa)) form an interaction with TGN38 region. Ser658 carries the post-translational modification Phosphoserine. The stretch at 671–788 (FKELQIKHAV…QRRVLEESEL (118 aa)) forms a coiled coil.

Interacts with DCLK2. Possibly exists as a homodimer, homotrimer or a homotetramer. Interacts with F-actin, PPP1CA, neurabin-1, TGN38 and D(2) dopamine receptor. Interacts with RGS1, RGS2, RGS4, RGS19 and ADRA1B, ADRA2A, ADRA2B, ADRA2C, CDKN2A, PPP1R2, RASGFR1 and TIAM1. Interacts (via C-terminus) with SPATA13 (via C-terminal tail). Interacts with ADRA2B. In terms of processing, stimulation of D1 (but not D2) dopamine receptors induces Ser-94 phosphorylation. Dephosphorylation of Ser-94 is mediated mainly by PP1 and to a lesser extent by PP2A. Phosphorylation of spinophilin disrupts its association with F-actin, but does not affect its binding to PP1.

The protein resides in the cytoplasm. It localises to the cytoskeleton. It is found in the nucleus. The protein localises to the cell projection. Its subcellular location is the dendritic spine. The protein resides in the postsynaptic density. It localises to the synapse. It is found in the cell junction. The protein localises to the adherens junction. Its subcellular location is the cell membrane. The protein resides in the lamellipodium. It localises to the filopodium. It is found in the ruffle membrane. Its function is as follows. Seems to act as a scaffold protein in multiple signaling pathways. Modulates excitatory synaptic transmission and dendritic spine morphology. Binds to actin filaments (F-actin) and shows cross-linking activity. Binds along the sides of the F-actin. May play an important role in linking the actin cytoskeleton to the plasma membrane at the synaptic junction. Believed to target protein phosphatase 1/PP1 to dendritic spines, which are rich in F-actin, and regulates its specificity toward ion channels and other substrates, such as AMPA-type and NMDA-type glutamate receptors. Plays a role in regulation of G-protein coupled receptor signaling, including dopamine D2 receptors and alpha-adrenergic receptors. May establish a signaling complex for dopaminergic neurotransmission through D2 receptors by linking receptors downstream signaling molecules and the actin cytoskeleton. Binds to ADRA1B and RGS2 and mediates regulation of ADRA1B signaling. May confer to Rac signaling specificity by binding to both, RacGEFs and Rac effector proteins. Probably regulates p70 S6 kinase activity by forming a complex with TIAM1. Required for hepatocyte growth factor (HGF)-induced cell migration. This is Neurabin-2 (PPP1R9B) from Homo sapiens (Human).